Here is a 162-residue protein sequence, read N- to C-terminus: Phosphopantetheine adenylyltransferase (162 aa).

S11 lines the substrate pocket. ATP contacts are provided by residues 11 to 12 and H19; that span reads SF. The substrate site is built by K43, V76, and R90. ATP contacts are provided by residues 91–93, E101, and 126–132; these read GLR and HLYISSS.

Belongs to the bacterial CoaD family. Homohexamer. Mg(2+) is required as a cofactor.

It is found in the cytoplasm. The catalysed reaction is (R)-4'-phosphopantetheine + ATP + H(+) = 3'-dephospho-CoA + diphosphate. It participates in cofactor biosynthesis; coenzyme A biosynthesis; CoA from (R)-pantothenate: step 4/5. In terms of biological role, reversibly transfers an adenylyl group from ATP to 4'-phosphopantetheine, yielding dephospho-CoA (dPCoA) and pyrophosphate. In Streptococcus pneumoniae (strain 70585), this protein is Phosphopantetheine adenylyltransferase.